The sequence spans 202 residues: Na(+)-translocating NADH-quinone reductase subunit E (202 aa).

The next 6 helical transmembrane spans lie at 5–25, 35–55, 81–101, 114–134, 144–164, and 180–200; these read VSLF…FLGM, VSTA…TVPL, FLGL…LEMF, GVFL…LFMV, LTYG…LAGI, and LGIT…FGGM.

The protein belongs to the NqrDE/RnfAE family. As to quaternary structure, composed of six subunits; NqrA, NqrB, NqrC, NqrD, NqrE and NqrF.

Its subcellular location is the cell inner membrane. The catalysed reaction is a ubiquinone + n Na(+)(in) + NADH + H(+) = a ubiquinol + n Na(+)(out) + NAD(+). NQR complex catalyzes the reduction of ubiquinone-1 to ubiquinol by two successive reactions, coupled with the transport of Na(+) ions from the cytoplasm to the periplasm. NqrA to NqrE are probably involved in the second step, the conversion of ubisemiquinone to ubiquinol. This Psychrobacter sp. (strain PRwf-1) protein is Na(+)-translocating NADH-quinone reductase subunit E.